Consider the following 201-residue polypeptide: Adenylyl-sulfate kinase (201 aa).

Residue 35–42 (GLSGSGKS) participates in ATP binding. Ser-109 acts as the Phosphoserine intermediate in catalysis.

It belongs to the APS kinase family.

The enzyme catalyses adenosine 5'-phosphosulfate + ATP = 3'-phosphoadenylyl sulfate + ADP + H(+). The protein operates within sulfur metabolism; hydrogen sulfide biosynthesis; sulfite from sulfate: step 2/3. In terms of biological role, catalyzes the synthesis of activated sulfate. The chain is Adenylyl-sulfate kinase from Shigella boydii serotype 18 (strain CDC 3083-94 / BS512).